The following is a 290-amino-acid chain: Probable septum site-determining protein MinC (290 aa).

Belongs to the MinC family. Interacts with MinD and FtsZ.

Its function is as follows. Cell division inhibitor that blocks the formation of polar Z ring septums. Rapidly oscillates between the poles of the cell to destabilize FtsZ filaments that have formed before they mature into polar Z rings. Prevents FtsZ polymerization. This Heliobacterium modesticaldum (strain ATCC 51547 / Ice1) protein is Probable septum site-determining protein MinC.